A 206-amino-acid chain; its full sequence is Guanylate kinase (206 aa).

In terms of domain architecture, Guanylate kinase-like spans Gly6–Arg184. Residue Ala13–Ser20 participates in ATP binding.

The protein belongs to the guanylate kinase family.

It localises to the cytoplasm. It carries out the reaction GMP + ATP = GDP + ADP. Its function is as follows. Essential for recycling GMP and indirectly, cGMP. The polypeptide is Guanylate kinase (Pseudomonas fluorescens (strain ATCC BAA-477 / NRRL B-23932 / Pf-5)).